The primary structure comprises 323 residues: Beta-ketoacyl-[acyl-carrier-protein] synthase III (323 aa).

Catalysis depends on residues C113 and H250. Residues 251–255 (QANRR) form an ACP-binding region. The active site involves N280.

This sequence belongs to the thiolase-like superfamily. FabH family. Homodimer.

It is found in the cytoplasm. The catalysed reaction is malonyl-[ACP] + acetyl-CoA + H(+) = 3-oxobutanoyl-[ACP] + CO2 + CoA. The protein operates within lipid metabolism; fatty acid biosynthesis. Functionally, catalyzes the condensation reaction of fatty acid synthesis by the addition to an acyl acceptor of two carbons from malonyl-ACP. Catalyzes the first condensation reaction which initiates fatty acid synthesis and may therefore play a role in governing the total rate of fatty acid production. Possesses both acetoacetyl-ACP synthase and acetyl transacylase activities. Its substrate specificity determines the biosynthesis of branched-chain and/or straight-chain of fatty acids. The chain is Beta-ketoacyl-[acyl-carrier-protein] synthase III from Rhizobium meliloti (strain 1021) (Ensifer meliloti).